The sequence spans 1598 residues: Mushroom body large-type Kenyon cell-specific protein 1 (1598 aa).

Disordered regions lie at residues 83 to 105 (PGNL…SLPA), 140 to 387 (RHHH…SDGI), 436 to 462 (PHDD…PMSV), and 495 to 525 (PLVG…SQDN). A compositionally biased stretch (basic residues) spans 140–151 (RHHHLQNHHHHL). The span at 164–174 (QQQQQQQQRQQ) shows a compositional bias: low complexity. Basic and acidic residues predominate over residues 175 to 191 (QRQEERRLRPDEIKVEV). The span at 210-263 (STDASTPATVTTTGATTTLPAASATGTGPATPSAVVATSNATAAMTTGTTTIPT) shows a compositional bias: low complexity. Acidic residues predominate over residues 275–291 (EGADDRDDDEENEEEED). Basic and acidic residues-rich tracts occupy residues 292-305 (GRGQ…LKLD), 315-324 (LRREKDRGSR), and 335-346 (DGTKERTEEVAL). S444 bears the Phosphoserine; by MAPK mark. Over residues 445 to 461 (PQSDSSSSSRSAESPMS) the composition is skewed to low complexity. In terms of domain architecture, HTH psq-type 1 spans 582–634 (VGAGGGRRAYTEEELQAALRDIQSGKLGTRRAAVIYGIPRSTLRNKVYKLAME). A DNA-binding region (H-T-H motif) is located at residues 610-630 (TRRAAVIYGIPRSTLRNKVYK). Disordered regions lie at residues 636 to 705 (ERDA…SGAE), 797 to 877 (RLSK…DSAQ), 962 to 1045 (GQTV…NYDR), 1082 to 1145 (ERHL…NGIK), 1248 to 1283 (ETSA…NGSF), and 1301 to 1598 (RAMT…SVEQ). Over residues 653–687 (APATTITTITTTTTTTTTTTTTTTTPNTTQNASAT) the composition is skewed to low complexity. Over residues 694 to 705 (DEVDDKELSGAE) the composition is skewed to acidic residues. A compositionally biased stretch (low complexity) spans 820-855 (THPQAQAQAQPQQQQQQQQQQPQQQQQQQQQQQQQQ). Gly residues predominate over residues 965–975 (VSGGGMGGCQP). A compositionally biased stretch (low complexity) spans 1003 to 1021 (ANAQQGQAQAQAKPQSQEA). Residues 1034–1086 (RPKRGKYRNYDRDSLVEAVRAVQRGEMSVHRAGSYYGVPHSTLEYKVKERHLM) form the HTH psq-type 2 domain. The H-T-H motif DNA-binding region spans 1062-1082 (VHRAGSYYGVPHSTLEYKVKE). Over residues 1093-1102 (QKQSDDKTKE) the composition is skewed to basic and acidic residues. Positions 1103–1120 (TSTVTAAAAATNIRPGTA) are enriched in low complexity. The span at 1309–1318 (QQQQASSQQQ) shows a compositional bias: low complexity. 2 stretches are compositionally biased toward basic and acidic residues: residues 1383 to 1392 (DRGRNDDGSD) and 1407 to 1442 (GSRD…DRKT). A compositionally biased stretch (low complexity) spans 1447 to 1466 (PQQPQQQQQQQQQQQQQQQQ). Residues 1481-1497 (TDKKSACDSKLIVDHSS) are compositionally biased toward basic and acidic residues. Low complexity predominate over residues 1501-1547 (QQQQPQQQQQQQQQQQPQQQSQQPQQQQPQPQQQQQQQQQQQPQQQQ). Residues 1562 to 1577 (RGYNSGNNRSGEQANS) are compositionally biased toward polar residues.

As to quaternary structure, homodimer. In terms of tissue distribution, large-type Kenyon cells of mushroom body.

It is found in the nucleus. Its function is as follows. Transcriptional activator which binds to the consensus sequence 5'-CCCTATCGATCGATCTCTACCT-3'. May play a role in higher-order sensory processing. The polypeptide is Mushroom body large-type Kenyon cell-specific protein 1 (Mblk-1) (Apis mellifera (Honeybee)).